We begin with the raw amino-acid sequence, 439 residues long: Secreted RxLR effector protein 117 (439 aa).

The N-terminal stretch at 1-21 (MRGAYYVLAALLVVASSQIAA) is a signal peptide. Residues 48–65 (RYLRGGHDVHDDSANEER) carry the RxLR-dEER motif.

The protein belongs to the RxLR effector family.

It localises to the secreted. It is found in the host nucleus. Secreted effector that acts as an elicitor that induces cell death in host plant cells. The polypeptide is Secreted RxLR effector protein 117 (Plasmopara viticola (Downy mildew of grapevine)).